We begin with the raw amino-acid sequence, 179 residues long: MGVLDIAKGMGVTLGKLFQKPVTVSYPEERVTLQPRFRGRHVLTRHPDTGLEKCIGCSLCAAVCPAYAIYVEAAENDPLNPTSPGERYAKVYEINMLRCIFCGLCEEACPTGAVVLGNEFEMADYRSRDFVYGKEDMLVGVEGSLPQRREAQRTGKPVRLGFKVPKGPRPELEGVEYPR.

2 4Fe-4S ferredoxin-type domains span residues 45–74 and 90–119; these read RHPDTGLEKCIGCSLCAAVCPAYAIYVEAA and KVYEINMLRCIFCGLCEEACPTGAVVLGNE. [4Fe-4S] cluster-binding residues include Cys54, Cys57, Cys60, Cys64, Cys99, Cys102, Cys105, and Cys109. The segment at 146–179 is disordered; it reads PQRREAQRTGKPVRLGFKVPKGPRPELEGVEYPR. Positions 168–179 are enriched in basic and acidic residues; the sequence is PRPELEGVEYPR.

Belongs to the complex I 23 kDa subunit family. NDH-1 is composed of 15 different subunits. Subunits NuoA, H, J, K, L, M, N constitute the membrane sector of the complex. [4Fe-4S] cluster is required as a cofactor.

It is found in the cell membrane. It carries out the reaction a quinone + NADH + 5 H(+)(in) = a quinol + NAD(+) + 4 H(+)(out). In terms of biological role, NDH-1 shuttles electrons from NADH, via FMN and iron-sulfur (Fe-S) centers, to quinones in the respiratory chain. The immediate electron acceptor for the enzyme in this species is believed to be ubiquinone. Couples the redox reaction to proton translocation (for every two electrons transferred, four hydrogen ions are translocated across the cytoplasmic membrane), and thus conserves the redox energy in a proton gradient. The protein is NADH-quinone oxidoreductase subunit I of Deinococcus geothermalis (strain DSM 11300 / CIP 105573 / AG-3a).